The sequence spans 337 residues: Diacylglycerol O-acyltransferase 2-like protein 6 (337 aa).

2 consecutive transmembrane segments (helical) span residues 22-42 (IPVY…FLLF) and 102-122 (YIIA…NFAT).

The protein belongs to the diacylglycerol acyltransferase family. Expressed in all tissues tested except pancreas.

Its subcellular location is the endoplasmic reticulum membrane. It carries out the reaction 1,2-di-(9Z-octadecenoyl)-sn-glycerol + (9Z)-octadecenoyl-CoA = 1,2,3-tri-(9Z-octadecenoyl)-glycerol + CoA. The enzyme catalyses 1-O-(9Z-octadecenyl)-glycerol + (9Z)-octadecenoyl-CoA = 1-O-(9Z-octadecyl)-3-(9Z-octadecenoyl)-glycerol + CoA. The catalysed reaction is 1-(9Z-octadecenoyl)-glycerol + (9Z)-octadecenoyl-CoA = 1,2-di-(9Z-octadecenoyl)-glycerol + CoA. In terms of biological role, diglyceride acyltransferase that uses fatty acyl-CoA as substrate. Particularly active with oleate as a substrate. Has no wax synthase activity to produce wax esters. Able to use 1-monoalkylglycerol (1-MAkG) as an acyl acceptor for the synthesis of monoalkyl-monoacylglycerol (MAMAG). The polypeptide is Diacylglycerol O-acyltransferase 2-like protein 6 (Homo sapiens (Human)).